The following is a 347-amino-acid chain: sn-glycerol-3-phosphate import ATP-binding protein UgpC 1 (347 aa).

The region spanning 4–234 (IELIDLKKNY…PETVFVAGFI (231 aa)) is the ABC transporter domain. 36–43 (GPSGCGKS) serves as a coordination point for ATP.

This sequence belongs to the ABC transporter superfamily. sn-glycerol-3-phosphate importer (TC 3.A.1.1.3) family. The complex is composed of two ATP-binding proteins (UgpC), two transmembrane proteins (UgpA and UgpE) and a solute-binding protein (UgpB).

It is found in the cell inner membrane. It catalyses the reaction sn-glycerol 3-phosphate(out) + ATP + H2O = sn-glycerol 3-phosphate(in) + ADP + phosphate + H(+). Part of the ABC transporter complex UgpBAEC involved in sn-glycerol-3-phosphate (G3P) import. Responsible for energy coupling to the transport system. This chain is sn-glycerol-3-phosphate import ATP-binding protein UgpC 1, found in Rhizobium etli (strain ATCC 51251 / DSM 11541 / JCM 21823 / NBRC 15573 / CFN 42).